A 505-amino-acid chain; its full sequence is Calcium/calmodulin-dependent protein kinase kinase 1 (505 aa).

Residues 26-61 (THLEEADGGPEPTRNGVDPPPRARAASVIPGSTSRL) form a disordered region. Phosphoserine is present on residues Ser67 and Ser74. Arg78 carries the post-translational modification Asymmetric dimethylarginine. Ser100 carries the post-translational modification Phosphoserine. Thr108 is subject to Phosphothreonine. The 282-residue stretch at 128 to 409 (YKLQSEIGKG…VPDIKLHPWV (282 aa)) folds into the Protein kinase domain. ATP-binding positions include 134–142 (IGKGAYGVV) and Lys157. Residues 167 to 189 (QYGFPRRPPPRGSQAAQGGPAKQ) form an RP domain region. Catalysis depends on Asp275, which acts as the Proton acceptor. The interval 435 to 440 (KNSVRL) is autoinhibitory domain. Positions 438–463 (VRLIPSWTTVILVKSMLRKRSFGNPF) are calmodulin-binding. Ser458, Ser475, and Ser492 each carry phosphoserine. The interval 460-505 (GNPFEPQARREERSMSAPGNLLVKEGFGEGGKSPELPGVQEDEAAS) is disordered.

It belongs to the protein kinase superfamily. Ser/Thr protein kinase family. As to quaternary structure, interacts with CAMK4 and calmodulin. Post-translationally, appears to be autophosphorylated in a Ca(2+)/calmodulin-dependent manner. Phosphorylated at multiple sites by PRCAKA/PKA. Phosphorylation of Ser-458 is blocked upon binding to Ca(2+)/calmodulin. In vitro, phosphorylated by CAMK1 and CAMK4.

The protein localises to the cytoplasm. Its subcellular location is the nucleus. It catalyses the reaction L-seryl-[protein] + ATP = O-phospho-L-seryl-[protein] + ADP + H(+). The enzyme catalyses L-threonyl-[protein] + ATP = O-phospho-L-threonyl-[protein] + ADP + H(+). Activated by Ca(2+)/calmodulin. Binding of calmodulin may relieve intrasteric autoinhibition. Partially inhibited upon phosphorylation by PRCAKA/PKA. May be regulated through phosphorylation by CAMK1 and CAMK4. In terms of biological role, calcium/calmodulin-dependent protein kinase that belongs to a proposed calcium-triggered signaling cascade involved in a number of cellular processes. Phosphorylates CAMK1, CAMK1D, CAMK1G and CAMK4. Involved in regulating cell apoptosis. Promotes cell survival by phosphorylating AKT1/PKB that inhibits pro-apoptotic BAD/Bcl2-antagonist of cell death. The chain is Calcium/calmodulin-dependent protein kinase kinase 1 (CAMKK1) from Homo sapiens (Human).